A 117-amino-acid chain; its full sequence is UPF0102 protein Clos_1471 (117 aa).

It belongs to the UPF0102 family.

This chain is UPF0102 protein Clos_1471, found in Alkaliphilus oremlandii (strain OhILAs) (Clostridium oremlandii (strain OhILAs)).